The chain runs to 353 residues: Lipase chaperone (353 aa).

The helical transmembrane segment at 12–32 (IVLYLILGCVVVCGVWYSFDV) threads the bilayer.

Belongs to the lipase chaperone family.

It localises to the cell inner membrane. May be involved in the folding of the extracellular lipase during its passage through the periplasm. The sequence is that of Lipase chaperone from Xylella fastidiosa (strain M23).